Consider the following 288-residue polypeptide: Putative branched-chain-amino-acid aminotransferase (288 aa).

N6-(pyridoxal phosphate)lysine is present on Lys146.

Belongs to the class-IV pyridoxal-phosphate-dependent aminotransferase family. The cofactor is pyridoxal 5'-phosphate.

It carries out the reaction L-leucine + 2-oxoglutarate = 4-methyl-2-oxopentanoate + L-glutamate. The enzyme catalyses L-isoleucine + 2-oxoglutarate = (S)-3-methyl-2-oxopentanoate + L-glutamate. It catalyses the reaction L-valine + 2-oxoglutarate = 3-methyl-2-oxobutanoate + L-glutamate. It participates in amino-acid biosynthesis; L-isoleucine biosynthesis; L-isoleucine from 2-oxobutanoate: step 4/4. It functions in the pathway amino-acid biosynthesis; L-leucine biosynthesis; L-leucine from 3-methyl-2-oxobutanoate: step 4/4. The protein operates within amino-acid biosynthesis; L-valine biosynthesis; L-valine from pyruvate: step 4/4. Functionally, acts on leucine, isoleucine and valine. In Methanocaldococcus jannaschii (strain ATCC 43067 / DSM 2661 / JAL-1 / JCM 10045 / NBRC 100440) (Methanococcus jannaschii), this protein is Putative branched-chain-amino-acid aminotransferase (ilvE).